Reading from the N-terminus, the 220-residue chain is Probable septum site-determining protein MinC (220 aa).

Belongs to the MinC family. Interacts with MinD and FtsZ.

Cell division inhibitor that blocks the formation of polar Z ring septums. Rapidly oscillates between the poles of the cell to destabilize FtsZ filaments that have formed before they mature into polar Z rings. Prevents FtsZ polymerization. The sequence is that of Probable septum site-determining protein MinC from Vibrio campbellii (strain ATCC BAA-1116).